A 207-amino-acid polypeptide reads, in one-letter code: MARKKVQRKLDGWKSKEWYNIEAPAYLNRAIVGNTMAGDPSLLVGRNIETTVGELTNDMTKNNTKVILRINNVVGDVATTDLMGHELTTDYIRSIVKRQTSRIDANIDVKTKDGYIIRVKPTCFTIKRARSSQIKAIREMMVNIVAKRASEADFETFMQEAILGRLSAAIYRQAKFIYPLRRVEIRKTQVEAAPAPAASAAPEPAAA.

Belongs to the eukaryotic ribosomal protein eS1 family.

The polypeptide is Small ribosomal subunit protein eS1 (Methanosarcina barkeri (strain Fusaro / DSM 804)).